We begin with the raw amino-acid sequence, 205 residues long: Coenzyme Q-binding protein COQ10, mitochondrial (205 aa).

It belongs to the COQ10 family. As to quaternary structure, interacts with coenzyme Q.

Its subcellular location is the mitochondrion inner membrane. Its function is as follows. Required for the function of coenzyme Q in the respiratory chain. May serve as a chaperone or may be involved in the transport of Q6 from its site of synthesis to the catalytic sites of the respiratory complexes. The sequence is that of Coenzyme Q-binding protein COQ10, mitochondrial (coq10-1) from Dictyostelium discoideum (Social amoeba).